The primary structure comprises 206 residues: High frequency lysogenization protein HflD homolog (206 aa).

It belongs to the HflD family.

It is found in the cytoplasm. Its subcellular location is the cell inner membrane. This is High frequency lysogenization protein HflD homolog from Marinobacter nauticus (strain ATCC 700491 / DSM 11845 / VT8) (Marinobacter aquaeolei).